The primary structure comprises 309 residues: Aspartate carbamoyltransferase catalytic subunit (309 aa).

Positions 55 and 56 each coordinate carbamoyl phosphate. Lys85 contributes to the L-aspartate binding site. Carbamoyl phosphate is bound by residues Arg106, His135, and Gln138. L-aspartate contacts are provided by Arg168 and Arg230. Residues Leu268 and Pro269 each contribute to the carbamoyl phosphate site.

It belongs to the aspartate/ornithine carbamoyltransferase superfamily. ATCase family. Heterododecamer (2C3:3R2) of six catalytic PyrB chains organized as two trimers (C3), and six regulatory PyrI chains organized as three dimers (R2).

It catalyses the reaction carbamoyl phosphate + L-aspartate = N-carbamoyl-L-aspartate + phosphate + H(+). It participates in pyrimidine metabolism; UMP biosynthesis via de novo pathway; (S)-dihydroorotate from bicarbonate: step 2/3. Catalyzes the condensation of carbamoyl phosphate and aspartate to form carbamoyl aspartate and inorganic phosphate, the committed step in the de novo pyrimidine nucleotide biosynthesis pathway. The protein is Aspartate carbamoyltransferase catalytic subunit of Vibrio campbellii (strain ATCC BAA-1116).